A 235-amino-acid polypeptide reads, in one-letter code: MCSSKMPCSPSASSLCAASPPNCCHPSCCQTTCCRTTSCSHSCSVSSCCRPQCCHSVCCQPTCCRPSCCQTTCCRTTCCHPSCCVSSCCRPQCCHSVCFQPTCCHPSCCISSSCCPSCCESSCCCPCCCLRPVCGRVSCHVTCYHPTCVISTCPHPLCCASPPLPLPFPSPPVPLPFFLSLALPSPPRPSPPLLSPVLIPSPSPSPSLPSLSPPLPSPPLPSPHFPSVNPKSMLQ.

The segment at 1 to 132 (MCSSKMPCSP…CCCPCCCLRP (132 aa)) is 16 X 5 AA repeats of C-C-[GIKRQVHEML]-[SPTRV]-[STVQRCP]. 16 consecutive repeat copies span residues 23–27 (CCHPS), 28–32 (CCQTT), 33–37 (CCRTT), 48–52 (CCRPQ), 53–57 (CCHSV), 58–62 (CCQPT), 63–67 (CCRPS), 68–72 (CCQTT), 78–82 (CCHPS), 83–87 (CCVSS), 88–92 (CCRPQ), 93–97 (CCHSV), 103–107 (CCHPS), 108–112 (CCISS), 118–122 (CCESS), and 128–132 (CCLRP). Positions 203 to 224 (SPSPSLPSLSPPLPSPPLPSPH) are enriched in pro residues. A disordered region spans residues 203 to 235 (SPSPSLPSLSPPLPSPPLPSPHFPSVNPKSMLQ).

Belongs to the KRTAP type 4 family. As to quaternary structure, interacts with hair keratins.

In terms of biological role, in the hair cortex, hair keratin intermediate filaments are embedded in an interfilamentous matrix, consisting of hair keratin-associated proteins (KRTAP), which are essential for the formation of a rigid and resistant hair shaft through their extensive disulfide bond cross-linking with abundant cysteine residues of hair keratins. The matrix proteins include the high-sulfur and high-glycine-tyrosine keratins. The sequence is that of Keratin-associated protein 4-16 from Homo sapiens (Human).